The primary structure comprises 950 residues: RNA polymerase-associated protein RapA (950 aa).

Residues 165-333 (EVADRMAPRV…FARLRLLDPN (169 aa)) form the Helicase ATP-binding domain. Residue 178–185 (DEVGLGKT) coordinates ATP. The DEAH box signature appears at 279-282 (DEAH). One can recognise a Helicase C-terminal domain in the interval 475–629 (RVEWLIDTLK…TCPTGNALQH (155 aa)).

Belongs to the SNF2/RAD54 helicase family. RapA subfamily. In terms of assembly, interacts with the RNAP. Has a higher affinity for the core RNAP than for the holoenzyme. Its ATPase activity is stimulated by binding to RNAP.

In terms of biological role, transcription regulator that activates transcription by stimulating RNA polymerase (RNAP) recycling in case of stress conditions such as supercoiled DNA or high salt concentrations. Probably acts by releasing the RNAP, when it is trapped or immobilized on tightly supercoiled DNA. Does not activate transcription on linear DNA. Probably not involved in DNA repair. The sequence is that of RNA polymerase-associated protein RapA from Pseudomonas aeruginosa (strain LESB58).